The primary structure comprises 408 residues: ORC1-type DNA replication protein 15 (408 aa).

ATP is bound by residues 60–64 (VGKTA), Y208, and R220.

Belongs to the CDC6/cdc18 family.

In terms of biological role, involved in regulation of DNA replication. This Haloarcula marismortui (strain ATCC 43049 / DSM 3752 / JCM 8966 / VKM B-1809) (Halobacterium marismortui) protein is ORC1-type DNA replication protein 15 (cdc6o).